The primary structure comprises 546 residues: uncharacterized protein (546 aa).

Disordered stretches follow at residues 37 to 101 (KEND…NQKL), 269 to 300 (QNKA…QPEV), and 392 to 443 (LSDL…TSAC). Basic and acidic residues-rich tracts occupy residues 81-93 (DDVK…ENNQ) and 274-283 (ADLRKTESHG). Residues 284-298 (THSQSTPPQHSSSQP) are compositionally biased toward low complexity.

This is an uncharacterized protein from Homo sapiens (Human).